Consider the following 101-residue polypeptide: Protein Tat (101 aa).

The interval 1 to 24 (MEPVDPNLEPWKHPGSQPRTACNN) is interaction with human CREBBP. A transactivation region spans residues 1 to 48 (MEPVDPNLEPWKHPGSQPRTACNNCYCKKCCFHCQVCFTKKGLGISYG). Zn(2+) contacts are provided by Cys-22, Cys-25, and Cys-27. The tract at residues 22–37 (CNNCYCKKCCFHCQVC) is cysteine-rich. Lys-28 is modified (N6-acetyllysine; by host PCAF). The Zn(2+) site is built by Cys-30, His-33, Cys-34, and Cys-37. The core stretch occupies residues 38–48 (FTKKGLGISYG). Residues 47 to 101 (YGRKKRRQRRRPPQDSQTHQSSLSKQPTSQLRGDPTGPTESKKKVERETETDPVH) are disordered. Basic residues predominate over residues 48 to 57 (GRKKRRQRRR). A Nuclear localization signal, RNA-binding (TAR), and protein transduction motif is present at residues 49–57 (RKKRRQRRR). The segment at 49 to 86 (RKKRRQRRRPPQDSQTHQSSLSKQPTSQLRGDPTGPTE) is interaction with the host capping enzyme RNGTT. An N6-acetyllysine; by host EP300 and GCN5L2 mark is found at Lys-50 and Lys-51. Asymmetric dimethylarginine; by host PRMT6 occurs at positions 52 and 53. The span at 61–77 (DSQTHQSSLSKQPTSQL) shows a compositional bias: polar residues. Residue Lys-71 forms a Glycyl lysine isopeptide (Lys-Gly) (interchain with G-Cter in ubiquitin) linkage. The Cell attachment site motif lies at 78-80 (RGD). Basic and acidic residues predominate over residues 86–101 (ESKKKVERETETDPVH).

It belongs to the lentiviruses Tat family. In terms of assembly, interacts with host CCNT1. Associates with the P-TEFb complex composed at least of Tat, P-TEFb (CDK9 and CCNT1), TAR RNA, RNA Pol II. Recruits the HATs CREBBP, TAF1/TFIID, EP300, PCAF and GCN5L2. Interacts with host KAT5/Tip60; this interaction targets the latter to degradation. Interacts with the host deacetylase SIRT1. Interacts with host capping enzyme RNGTT; this interaction stimulates RNGTT. Binds to host KDR, and to the host integrins ITGAV/ITGB3 and ITGA5/ITGB1. Interacts with host KPNB1/importin beta-1 without previous binding to KPNA1/importin alpha-1. Interacts with EIF2AK2. Interacts with host nucleosome assembly protein NAP1L1; this interaction may be required for the transport of Tat within the nucleus, since the two proteins interact at the nuclear rim. Interacts with host C1QBP/SF2P32; this interaction involves lysine-acetylated Tat. Interacts with the host chemokine receptors CCR2, CCR3 and CXCR4. Interacts with host DPP4/CD26; this interaction may trigger an anti-proliferative effect. Interacts with host LDLR. Interacts with the host extracellular matrix metalloproteinase MMP1. Interacts with host PRMT6; this interaction mediates Tat's methylation. Interacts with, and is ubiquitinated by MDM2/Hdm2. Interacts with host PSMC3 and HTATIP2. Interacts with STAB1; this interaction may overcome SATB1-mediated repression of IL2 and IL2RA (interleukin) in T cells by binding to the same domain than HDAC1. Interacts (when acetylated) with human CDK13, thereby increasing HIV-1 mRNA splicing and promoting the production of the doubly spliced HIV-1 protein Nef. Interacts with host TBP; this interaction modulates the activity of transcriptional pre-initiation complex. Interacts with host RELA. Interacts with host PLSCR1; this interaction negatively regulates Tat transactivation activity by altering its subcellular distribution. Post-translationally, asymmetrical arginine methylation by host PRMT6 seems to diminish the transactivation capacity of Tat and affects the interaction with host CCNT1. In terms of processing, acetylation by EP300, CREBBP, GCN5L2/GCN5 and PCAF regulates the transactivation activity of Tat. EP300-mediated acetylation of Lys-50 promotes dissociation of Tat from the TAR RNA through the competitive binding to PCAF's bromodomain. In addition, the non-acetylated Tat's N-terminus can also interact with PCAF. PCAF-mediated acetylation of Lys-28 enhances Tat's binding to CCNT1. Lys-50 is deacetylated by SIRT1. Polyubiquitination by host MDM2 does not target Tat to degradation, but activates its transactivation function and fosters interaction with CCNT1 and TAR RNA. Post-translationally, phosphorylated by EIF2AK2 on serine and threonine residues adjacent to the basic region important for TAR RNA binding and function. Phosphorylation of Tat by EIF2AK2 is dependent on the prior activation of EIF2AK2 by dsRNA.

Its subcellular location is the host nucleus. It localises to the host nucleolus. It is found in the host cytoplasm. The protein localises to the secreted. In terms of biological role, transcriptional activator that increases RNA Pol II processivity, thereby increasing the level of full-length viral transcripts. Recognizes a hairpin structure at the 5'-LTR of the nascent viral mRNAs referred to as the transactivation responsive RNA element (TAR) and recruits the cyclin T1-CDK9 complex (P-TEFb complex) that will in turn hyperphosphorylate the RNA polymerase II to allow efficient elongation. The CDK9 component of P-TEFb and other Tat-activated kinases hyperphosphorylate the C-terminus of RNA Pol II that becomes stabilized and much more processive. Other factors such as HTATSF1/Tat-SF1, SUPT5H/SPT5, and HTATIP2 are also important for Tat's function. Besides its effect on RNA Pol II processivity, Tat induces chromatin remodeling of proviral genes by recruiting the histone acetyltransferases (HATs) CREBBP, EP300 and PCAF to the chromatin. This also contributes to the increase in proviral transcription rate, especially when the provirus integrates in transcriptionally silent region of the host genome. To ensure maximal activation of the LTR, Tat mediates nuclear translocation of NF-kappa-B by interacting with host RELA. Through its interaction with host TBP, Tat may also modulate transcription initiation. Tat can reactivate a latently infected cell by penetrating in it and transactivating its LTR promoter. In the cytoplasm, Tat is thought to act as a translational activator of HIV-1 mRNAs. Its function is as follows. Extracellular circulating Tat can be endocytosed by surrounding uninfected cells via the binding to several surface receptors such as CD26, CXCR4, heparan sulfate proteoglycans (HSPG) or LDLR. Neurons are rarely infected, but they internalize Tat via their LDLR. Through its interaction with nuclear HATs, Tat is potentially able to control the acetylation-dependent cellular gene expression. Modulates the expression of many cellular genes involved in cell survival, proliferation or in coding for cytokines or cytokine receptors. Tat plays a role in T-cell and neurons apoptosis. Tat induced neurotoxicity and apoptosis probably contribute to neuroAIDS. Circulating Tat also acts as a chemokine-like and/or growth factor-like molecule that binds to specific receptors on the surface of the cells, affecting many cellular pathways. In the vascular system, Tat binds to ITGAV/ITGB3 and ITGA5/ITGB1 integrins dimers at the surface of endothelial cells and competes with bFGF for heparin-binding sites, leading to an excess of soluble bFGF. The chain is Protein Tat from Human immunodeficiency virus type 1 group M subtype B (isolate YU-2) (HIV-1).